Reading from the N-terminus, the 201-residue chain is UPF0098 protein MT1961 (201 aa).

Residues 125–146 are disordered; that stretch reads TADGETPGGGISLPNSSGQPAY.

The protein belongs to the UPF0098 family.

This chain is UPF0098 protein MT1961, found in Mycobacterium tuberculosis (strain CDC 1551 / Oshkosh).